The primary structure comprises 273 residues: MNAIFVANKPTGLSSNQFLNRLKRKYGVKKAGFSGTLDPFASGCLIVAFGSYTKFFRFLDKTPKIYEATMWIGASSPSGDNENITDVKILKPFADESLEIARKSLLGRLKYIPPKFSAKNINGTRAYKLARTGEEFSLKEQEMEVFSCEILSYRHPFLTFRISLSEGGYVRSYAQLFGKRLGYDVCLSELKRISEGKFRFENEKFLNICEILNLPRNKYLGDVADIMDGKSLKPSDFTTQKDGIYLLEYDKFLSIIEIKNDTISYCLNKVEKC.

Catalysis depends on Asp-38, which acts as the Nucleophile.

Belongs to the pseudouridine synthase TruB family. Type 1 subfamily.

It carries out the reaction uridine(55) in tRNA = pseudouridine(55) in tRNA. In terms of biological role, responsible for synthesis of pseudouridine from uracil-55 in the psi GC loop of transfer RNAs. The chain is tRNA pseudouridine synthase B from Campylobacter curvus (strain 525.92).